The sequence spans 138 residues: Large ribosomal subunit protein uL16 (138 aa).

It belongs to the universal ribosomal protein uL16 family. Part of the 50S ribosomal subunit.

Functionally, binds 23S rRNA and is also seen to make contacts with the A and possibly P site tRNAs. This is Large ribosomal subunit protein uL16 from Paramagnetospirillum magneticum (strain ATCC 700264 / AMB-1) (Magnetospirillum magneticum).